Reading from the N-terminus, the 463-residue chain is Probable glucan endo-1,3-beta-glucosidase eglC (463 aa).

The first 18 residues, 1-18 (MQLTHLLAFALSLATSEA), serve as a signal peptide directing secretion. An N-linked (GlcNAc...) asparagine glycan is attached at N84. The active-site Proton donor is the E128. A glycan (N-linked (GlcNAc...) asparagine) is linked at N183. E239 acts as the Nucleophile in catalysis. N312 carries N-linked (GlcNAc...) asparagine glycosylation. Disordered regions lie at residues 317 to 354 (SASASSSAAGSATPVGSAVPSGSAAVNPSSSGIVSSAV) and 396 to 430 (SGSSATSTTAGSSSDSSSTNSGKSSSESSSTNSGA). G440 is lipidated: GPI-anchor amidated glycine. The propeptide at 441-463 (GASSVSGSVFGALVAVFAFVATL) is removed in mature form.

This sequence belongs to the glycosyl hydrolase 17 family. Post-translationally, the GPI-anchor is attached to the protein in the endoplasmic reticulum and serves to target the protein to the cell surface. There, the glucosamine-inositol phospholipid moiety is cleaved off and the GPI-modified mannoprotein is covalently attached via its lipidless GPI glycan remnant to the 1,6-beta-glucan of the outer cell wall layer.

The protein resides in the cell membrane. Its subcellular location is the secreted. It localises to the cell wall. The enzyme catalyses Hydrolysis of (1-&gt;3)-beta-D-glucosidic linkages in (1-&gt;3)-beta-D-glucans.. Glucanases play a role in cell expansion during growth, in cell-cell fusion during mating, and in spore release during sporulation. This enzyme may be involved in beta-glucan degradation and also function biosynthetically as a transglycosylase. This is Probable glucan endo-1,3-beta-glucosidase eglC (eglC) from Aspergillus oryzae (strain ATCC 42149 / RIB 40) (Yellow koji mold).